The sequence spans 429 residues: Small ribosomal subunit protein bS1 (429 aa).

4 S1 motif domains span residues 55–128, 144–211, 231–299, and 316–385; these read GDVV…LSKK, GDTV…SRKA, GEVV…LSIK, and GSVL…LSMK. A compositionally biased stretch (basic and acidic residues) spans 382–399; it reads LSMKALEEKPEREDRRGN. The tract at residues 382–412 is disordered; the sequence is LSMKALEEKPEREDRRGNDGSASRADIAAYK.

The protein belongs to the bacterial ribosomal protein bS1 family.

Binds mRNA; thus facilitating recognition of the initiation point. It is needed to translate mRNA with a short Shine-Dalgarno (SD) purine-rich sequence. In Leuconostoc lactis, this protein is Small ribosomal subunit protein bS1 (rps1).